We begin with the raw amino-acid sequence, 485 residues long: Ribulose bisphosphate carboxylase large chain 2 (485 aa).

Substrate-binding residues include Asn-124 and Thr-174. Lys-176 serves as the catalytic Proton acceptor. Lys-178 contributes to the substrate binding site. Mg(2+)-binding residues include Lys-202, Asp-204, and Glu-205. Lys-202 carries the post-translational modification N6-carboxylysine. The active-site Proton acceptor is the His-294. Residues Arg-295, His-327, and Ser-379 each coordinate substrate.

This sequence belongs to the RuBisCO large chain family. Type I subfamily. Heterohexadecamer of 8 large chains and 8 small chains. It depends on Mg(2+) as a cofactor.

It catalyses the reaction 2 (2R)-3-phosphoglycerate + 2 H(+) = D-ribulose 1,5-bisphosphate + CO2 + H2O. It carries out the reaction D-ribulose 1,5-bisphosphate + O2 = 2-phosphoglycolate + (2R)-3-phosphoglycerate + 2 H(+). Its function is as follows. RuBisCO catalyzes two reactions: the carboxylation of D-ribulose 1,5-bisphosphate, the primary event in carbon dioxide fixation, as well as the oxidative fragmentation of the pentose substrate. Both reactions occur simultaneously and in competition at the same active site. This Rhodopseudomonas palustris (strain BisB5) protein is Ribulose bisphosphate carboxylase large chain 2.